The following is a 288-amino-acid chain: ATP synthase gamma chain (288 aa).

The protein belongs to the ATPase gamma chain family. F-type ATPases have 2 components, CF(1) - the catalytic core - and CF(0) - the membrane proton channel. CF(1) has five subunits: alpha(3), beta(3), gamma(1), delta(1), epsilon(1). CF(0) has three main subunits: a, b and c.

It is found in the cell inner membrane. Produces ATP from ADP in the presence of a proton gradient across the membrane. The gamma chain is believed to be important in regulating ATPase activity and the flow of protons through the CF(0) complex. In Legionella pneumophila (strain Paris), this protein is ATP synthase gamma chain.